The chain runs to 266 residues: Endoplasmic reticulum vesicle protein 25 (266 aa).

The N-terminal stretch at 1 to 26 is a signal peptide; it reads MGSSPQSSTRTLLGLLFLLLVQLSSA. Residues 27–188 are Lumenal-facing; the sequence is LKFDLHASSG…TNESTNERVK (162 aa). Residues 39–129 form the GOLD domain; it reads ERCIRNFVFK…YKSVELDVEI (91 aa). Residues 189-209 traverse the membrane as a helical segment; sequence WFAFGTMGMLVGLGVWQVVYL. The Cytoplasmic segment spans residues 210 to 266; it reads RAYFRYVDFPVSWRVDGVVANCCSCCEQVEASYLRSSRVVFWSPLVMWTRLSWLILR.

This sequence belongs to the EMP24/GP25L family.

The protein resides in the endoplasmic reticulum membrane. The protein localises to the golgi apparatus membrane. Constituent of COPII-coated endoplasmic reticulum-derived transport vesicles. Required for efficient transport of a subset of secretory proteins to the Golgi. Facilitates retrograde transport from the Golgi to the endoplasmic reticulum. This is Endoplasmic reticulum vesicle protein 25 (erv25) from Aspergillus fumigatus (strain ATCC MYA-4609 / CBS 101355 / FGSC A1100 / Af293) (Neosartorya fumigata).